Reading from the N-terminus, the 848-residue chain is Beta-galactosidase 13 (848 aa).

The signal sequence occupies residues 1-27 (MKIHSSDHSWLLLAVLVILLSFSGALS). A glycan (N-linked (GlcNAc...) asparagine) is linked at asparagine 107. The active-site Proton donor is the glutamate 200. Glutamate 271 functions as the Nucleophile in the catalytic mechanism. Asparagine 272, asparagine 303, asparagine 376, asparagine 398, asparagine 782, asparagine 787, and asparagine 817 each carry an N-linked (GlcNAc...) asparagine glycan. One can recognise an SUEL-type lectin domain in the interval 754-843 (DDVHLTANLK…KKLAVQVKCG (90 aa)).

It belongs to the glycosyl hydrolase 35 family. In terms of tissue distribution, ubiquitous, with higher expression levels in roots, flowers and siliques.

The protein resides in the secreted. Its subcellular location is the extracellular space. The protein localises to the apoplast. The enzyme catalyses Hydrolysis of terminal non-reducing beta-D-galactose residues in beta-D-galactosides.. This Arabidopsis thaliana (Mouse-ear cress) protein is Beta-galactosidase 13 (BGAL13).